A 222-amino-acid chain; its full sequence is Mediator of RNA polymerase II transcription subunit 7 (222 aa).

The interval 34 to 55 (YKEKKAASAKQTAPNNSNGGSE) is disordered. Over residues 42–53 (AKQTAPNNSNGG) the composition is skewed to polar residues.

The protein belongs to the Mediator complex subunit 7 family. In terms of assembly, component of the Mediator complex, which is composed of at least 21 subunits that form three structurally distinct submodules. The Mediator head module contains MED6, MED8, MED11, SRB4/MED17, SRB5/MED18, ROX3/MED19, SRB2/MED20 and SRB6/MED22, the middle module contains MED1, MED4, NUT1/MED5, MED7, CSE2/MED9, NUT2/MED10, SRB7/MED21 and SOH1/MED31, and the tail module contains MED2, PGD1/MED3, RGR1/MED14, GAL11/MED15 and SIN4/MED16. The head and the middle modules interact directly with RNA polymerase II, whereas the elongated tail module interacts with gene-specific regulatory proteins. MED7 interacts directly with MED1, MED4 and SRB7/MED21.

Its subcellular location is the nucleus. Component of the Mediator complex, a coactivator involved in the regulated transcription of nearly all RNA polymerase II-dependent genes. Mediator functions as a bridge to convey information from gene-specific regulatory proteins to the basal RNA polymerase II transcription machinery. The Mediator complex, having a compact conformation in its free form, is recruited to promoters by direct interactions with regulatory proteins and serves for the assembly of a functional preinitiation complex with RNA polymerase II and the general transcription factors. The Mediator complex unfolds to an extended conformation and partially surrounds RNA polymerase II, specifically interacting with the unphosphorylated form of the C-terminal domain (CTD) of RNA polymerase II. The Mediator complex dissociates from the RNA polymerase II holoenzyme and stays at the promoter when transcriptional elongation begins. In Saccharomyces cerevisiae (strain ATCC 204508 / S288c) (Baker's yeast), this protein is Mediator of RNA polymerase II transcription subunit 7 (MED7).